Consider the following 386-residue polypeptide: Short integuments 2, mitochondrial (386 aa).

The region spanning 37–207 is the CP-type G domain; the sequence is TRAIRNRLKL…VLDSPGVLVP (171 aa). Residues 55 to 59 carry the DARXP motif motif; it reads DARIP. A G4 region spans residues 81–84; sequence NKKD. GTP-binding positions include 81–84, 109–110, and 146–151; these read NKKD, NA, and NVGKSA. The tract at residues 109 to 111 is G5; that stretch reads NAH. Residues 143–150 form a G1 region; it reads GVPNVGKS. The interval 180 to 184 is G2; it reads GVTQD. Residues 200–203 are G3; that stretch reads DSPG. Residue glycine 203 participates in GTP binding.

Belongs to the TRAFAC class YlqF/YawG GTPase family. MTG1 subfamily. Expressed in seedlings, roots, leaves, stems, inflorescences and siliques.

Its subcellular location is the mitochondrion. GTPase that may function in mitochondrial ribosome assembly. Involved in a variety of growth processes during vegetative development and promotes growth and cell division in the developing integuments. This chain is Short integuments 2, mitochondrial, found in Arabidopsis thaliana (Mouse-ear cress).